Consider the following 164-residue polypeptide: Phosphopantetheine adenylyltransferase (164 aa).

Ser-9 provides a ligand contact to substrate. ATP is bound by residues 9-10 and His-17; that span reads SF. Substrate is bound by residues Lys-41, Val-78, and Arg-92. Residues 93 to 95, Glu-103, and 128 to 134 each bind ATP; these read GLR and VRTITAT.

Belongs to the bacterial CoaD family. As to quaternary structure, homohexamer. Requires Mg(2+) as cofactor.

The protein localises to the cytoplasm. The enzyme catalyses (R)-4'-phosphopantetheine + ATP + H(+) = 3'-dephospho-CoA + diphosphate. Its pathway is cofactor biosynthesis; coenzyme A biosynthesis; CoA from (R)-pantothenate: step 4/5. In terms of biological role, reversibly transfers an adenylyl group from ATP to 4'-phosphopantetheine, yielding dephospho-CoA (dPCoA) and pyrophosphate. This Brucella anthropi (strain ATCC 49188 / DSM 6882 / CCUG 24695 / JCM 21032 / LMG 3331 / NBRC 15819 / NCTC 12168 / Alc 37) (Ochrobactrum anthropi) protein is Phosphopantetheine adenylyltransferase.